We begin with the raw amino-acid sequence, 358 residues long: Ribosomal RNA large subunit methyltransferase M (358 aa).

S-adenosyl-L-methionine is bound by residues Ser-187, 220–223, Asp-239, Asp-259, and Asp-276; that span reads CPGG. The Proton acceptor role is filled by Lys-305.

The protein belongs to the class I-like SAM-binding methyltransferase superfamily. RNA methyltransferase RlmE family. RlmM subfamily. Monomer.

The protein localises to the cytoplasm. The enzyme catalyses cytidine(2498) in 23S rRNA + S-adenosyl-L-methionine = 2'-O-methylcytidine(2498) in 23S rRNA + S-adenosyl-L-homocysteine + H(+). Catalyzes the 2'-O-methylation at nucleotide C2498 in 23S rRNA. This is Ribosomal RNA large subunit methyltransferase M from Shewanella woodyi (strain ATCC 51908 / MS32).